The following is a 72-amino-acid chain: Small ribosomal subunit protein bS18 (72 aa).

The protein belongs to the bacterial ribosomal protein bS18 family. In terms of assembly, part of the 30S ribosomal subunit. Forms a tight heterodimer with protein bS6.

Binds as a heterodimer with protein bS6 to the central domain of the 16S rRNA, where it helps stabilize the platform of the 30S subunit. This chain is Small ribosomal subunit protein bS18, found in Trichodesmium erythraeum (strain IMS101).